The chain runs to 429 residues: UDP-N-acetylglucosamine 1-carboxyvinyltransferase (429 aa).

22 to 23 (KN) lines the phosphoenolpyruvate pocket. Arginine 93 lines the UDP-N-acetyl-alpha-D-glucosamine pocket. Cysteine 117 acts as the Proton donor in catalysis. Cysteine 117 carries the 2-(S-cysteinyl)pyruvic acid O-phosphothioketal modification. Residues 122–126 (RPVDL), aspartate 307, and valine 329 each bind UDP-N-acetyl-alpha-D-glucosamine.

The protein belongs to the EPSP synthase family. MurA subfamily.

The protein localises to the cytoplasm. It carries out the reaction phosphoenolpyruvate + UDP-N-acetyl-alpha-D-glucosamine = UDP-N-acetyl-3-O-(1-carboxyvinyl)-alpha-D-glucosamine + phosphate. The protein operates within cell wall biogenesis; peptidoglycan biosynthesis. Functionally, cell wall formation. Adds enolpyruvyl to UDP-N-acetylglucosamine. In Chloroherpeton thalassium (strain ATCC 35110 / GB-78), this protein is UDP-N-acetylglucosamine 1-carboxyvinyltransferase.